The primary structure comprises 412 residues: NAD-dependent dihydropyrimidine dehydrogenase subunit PreT (412 aa).

Glu-286 contacts NAD(+).

It belongs to the NADH dehydrogenase family. As to quaternary structure, heterotetramer of 2 PreA and 2 PreT subunits.

It carries out the reaction 5,6-dihydrouracil + NAD(+) = uracil + NADH + H(+). It catalyses the reaction 5,6-dihydrothymine + NAD(+) = thymine + NADH + H(+). Functionally, involved in pyrimidine base degradation. Catalyzes physiologically the reduction of uracil to 5,6-dihydrouracil (DHU) by using NADH as a specific cosubstrate. It also catalyzes the reverse reaction and the reduction of thymine to 5,6-dihydrothymine (DHT). The chain is NAD-dependent dihydropyrimidine dehydrogenase subunit PreT (preT) from Escherichia coli (strain K12).